The primary structure comprises 62 residues: Pro-MCH variant (62 aa).

Residues 23–41 (GSVAFPAENGVQDTESTQE) are NGE-like. The disordered stretch occupies residues 28-62 (PAENGVQDTESTQEKRETGDEENSAQFPIGRRDFD). Positions 44 to 56 (ETGDEENSAQFPI) are NEI-like. Positions 60–62 (DFD) are melanin-concentrating hormone-like.

This sequence belongs to the melanin-concentrating hormone family.

This Hylobates lar (Lar gibbon) protein is Pro-MCH variant (PMCHL1).